We begin with the raw amino-acid sequence, 176 residues long: Large ribosomal subunit protein uL10 (176 aa).

The protein belongs to the universal ribosomal protein uL10 family. In terms of assembly, part of the ribosomal stalk of the 50S ribosomal subunit. The N-terminus interacts with L11 and the large rRNA to form the base of the stalk. The C-terminus forms an elongated spine to which L12 dimers bind in a sequential fashion forming a multimeric L10(L12)X complex.

Forms part of the ribosomal stalk, playing a central role in the interaction of the ribosome with GTP-bound translation factors. This chain is Large ribosomal subunit protein uL10, found in Carboxydothermus hydrogenoformans (strain ATCC BAA-161 / DSM 6008 / Z-2901).